Reading from the N-terminus, the 100-residue chain is MELTPREKDKLLLFTAALLAERRKARGLKLNYPEAVALISAAILEGARDGRSVAELMSLGGEVLTRDEVMDGVAEMIPEVQVEATFPDGVKLVTVHEPVR.

The protein belongs to the urease gamma subunit family. As to quaternary structure, heterotrimer of UreA (gamma), UreB (beta) and UreC (alpha) subunits. Three heterotrimers associate to form the active enzyme.

It is found in the cytoplasm. The catalysed reaction is urea + 2 H2O + H(+) = hydrogencarbonate + 2 NH4(+). The protein operates within nitrogen metabolism; urea degradation; CO(2) and NH(3) from urea (urease route): step 1/1. This chain is Urease subunit gamma, found in Thioalkalivibrio sulfidiphilus (strain HL-EbGR7).